A 506-amino-acid polypeptide reads, in one-letter code: Deoxyguanosinetriphosphate triphosphohydrolase (506 aa).

In terms of domain architecture, HD spans 66–274; that stretch reads RLTHSLEVQQ…MEAADDISYC (209 aa).

This sequence belongs to the dGTPase family. Type 1 subfamily. In terms of assembly, homotetramer. Mg(2+) serves as cofactor.

It carries out the reaction dGTP + H2O = 2'-deoxyguanosine + triphosphate + H(+). DGTPase preferentially hydrolyzes dGTP over the other canonical NTPs. The chain is Deoxyguanosinetriphosphate triphosphohydrolase from Yersinia pseudotuberculosis serotype O:3 (strain YPIII).